We begin with the raw amino-acid sequence, 268 residues long: Homeobox protein Hox-D12 (268 aa).

The disordered stretch occupies residues 102–124 (TPDAPTASEERSRTRPPFAPESS). Positions 200 to 259 (ARKKRKPYTKQQIAELENEFLVNEFINRQKRKELSNRLNLSDQQVKIWFQNRRMKKKRVV) form a DNA-binding region, homeobox.

The protein belongs to the Abd-B homeobox family.

Its subcellular location is the nucleus. Its function is as follows. Sequence-specific transcription factor which is part of a developmental regulatory system that provides cells with specific positional identities on the anterior-posterior axis. The sequence is that of Homeobox protein Hox-D12 (Hoxd12) from Mus musculus (Mouse).